The chain runs to 238 residues: Phosphoribosylaminoimidazole-succinocarboxamide synthase (238 aa).

Belongs to the SAICAR synthetase family.

It catalyses the reaction 5-amino-1-(5-phospho-D-ribosyl)imidazole-4-carboxylate + L-aspartate + ATP = (2S)-2-[5-amino-1-(5-phospho-beta-D-ribosyl)imidazole-4-carboxamido]succinate + ADP + phosphate + 2 H(+). It functions in the pathway purine metabolism; IMP biosynthesis via de novo pathway; 5-amino-1-(5-phospho-D-ribosyl)imidazole-4-carboxamide from 5-amino-1-(5-phospho-D-ribosyl)imidazole-4-carboxylate: step 1/2. This Methanococcoides burtonii (strain DSM 6242 / NBRC 107633 / OCM 468 / ACE-M) protein is Phosphoribosylaminoimidazole-succinocarboxamide synthase.